The primary structure comprises 1317 residues: Putative late blight resistance protein homolog R1B-14 (1317 aa).

Coiled coils occupy residues 419–442 and 535–556; these read RYSD…ESLQ and RMNE…RLLN. Residues 521-823 enclose the NB-ARC domain; that stretch reads TVITHTSSQL…SESFIKSSEG (303 aa). An ATP-binding site is contributed by 568–575; the sequence is GMPGLGKT. 6 LRR repeats span residues 944–968, 987–1015, 1090–1114, 1138–1161, 1164–1186, and 1187–1211; these read FKFL…LFYL, LWNL…IWDM, PIRL…ISAP, LKHL…KVSN, FPQL…ADDA, and FPNL…FMDI. Residues 1251–1317 enclose the HMA domain; sequence IKKMVLKFDI…VSKLRKRGML (67 aa).

This sequence belongs to the disease resistance NB-LRR family.

The protein localises to the cytoplasm. It localises to the membrane. Its function is as follows. Confers resistance to late blight (Phytophthora infestans) races carrying the avirulence gene Avr1. Resistance proteins guard the plant against pathogens that contain an appropriate avirulence protein via an indirect interaction with this avirulence protein. That triggers a defense system including the hypersensitive response, which restricts the pathogen growth. The chain is Putative late blight resistance protein homolog R1B-14 (R1B-14) from Solanum demissum (Wild potato).